Reading from the N-terminus, the 503-residue chain is Na(+)-translocating NADH-quinone reductase subunit B (503 aa).

4 helical membrane passes run 55-75, 120-140, 161-181, and 186-206; these read MMLVVIALFPATFLAIWNSGI, IFLPLLIISYTVGGACEVLFA, TLPPTIPYWMAALGIAFGVVV, and FGGTGMNILNPALSGRAFLFF. Thr248 carries the FMN phosphoryl threonine modification. Transmembrane regions (helical) follow at residues 361–381, 387–407, 417–437, 452–472, and 475–495; these read TSTFACLLGAVFLVITGIASW, FGIGAFVTAWLFKICSILIAG, FFIPAYRQLFLGGLAFGLVFM, WIYGLFIGFMTIIIRLINPAY, and GVMLAILLGNVFAPLLDYFAV.

Belongs to the NqrB/RnfD family. Composed of six subunits; NqrA, NqrB, NqrC, NqrD, NqrE and NqrF. FMN serves as cofactor.

It is found in the cell inner membrane. The catalysed reaction is a ubiquinone + n Na(+)(in) + NADH + H(+) = a ubiquinol + n Na(+)(out) + NAD(+). Its function is as follows. NQR complex catalyzes the reduction of ubiquinone-1 to ubiquinol by two successive reactions, coupled with the transport of Na(+) ions from the cytoplasm to the periplasm. NqrA to NqrE are probably involved in the second step, the conversion of ubisemiquinone to ubiquinol. This Chlamydia abortus (strain DSM 27085 / S26/3) (Chlamydophila abortus) protein is Na(+)-translocating NADH-quinone reductase subunit B.